Here is a 391-residue protein sequence, read N- to C-terminus: MTTPLDTPTREPLPLAPAGPGKLVMSAPRRGKPPRHFVDLEPAERGPAMVELGEKAFRGKQLATQWFERLEDDPARMTDLPAASRTRIAEALLPTLLTPIRTLTADGGTTIKSLYRLHDGALVESVLMRYKNRDTICISSQAGCGMNCPFCATGQAGLTRNLSTAEIVEQVTAASRALARDEVPGGPGRVSNVVFMGMGEALANYKSAVAAVRRLVSPAPDGLGISARGVTMSTVGLVPAIDKFAQEGIAATLALSLHAPDDELRDELVPINQRWKVGEALDAARRYFEATGRRVSIEYALIKDINDQAWRADRLGKLLNARGRGWVHVNPIPLNPTPGSKWTASDPAVERAFVAALENRGIPTTVRDTRGSDIDGACGQLAAIGPEQPRA.

The disordered stretch occupies residues 1–33; it reads MTTPLDTPTREPLPLAPAGPGKLVMSAPRRGKP. Positions 12-21 are enriched in low complexity; that stretch reads PLPLAPAGPG. The Proton acceptor role is filled by E124. The Radical SAM core domain occupies 130 to 373; that stretch reads YKNRDTICIS…TTVRDTRGSD (244 aa). A disulfide bond links C137 and C378. The [4Fe-4S] cluster site is built by C144, C148, and C151. S-adenosyl-L-methionine-binding positions include 199-200, S233, 256-258, and N335; these read GE and SLH. C378 (S-methylcysteine intermediate) is an active-site residue.

This sequence belongs to the radical SAM superfamily. RlmN family. The cofactor is [4Fe-4S] cluster.

It localises to the cytoplasm. It carries out the reaction adenosine(2503) in 23S rRNA + 2 reduced [2Fe-2S]-[ferredoxin] + 2 S-adenosyl-L-methionine = 2-methyladenosine(2503) in 23S rRNA + 5'-deoxyadenosine + L-methionine + 2 oxidized [2Fe-2S]-[ferredoxin] + S-adenosyl-L-homocysteine. The enzyme catalyses adenosine(37) in tRNA + 2 reduced [2Fe-2S]-[ferredoxin] + 2 S-adenosyl-L-methionine = 2-methyladenosine(37) in tRNA + 5'-deoxyadenosine + L-methionine + 2 oxidized [2Fe-2S]-[ferredoxin] + S-adenosyl-L-homocysteine. Functionally, specifically methylates position 2 of adenine 2503 in 23S rRNA and position 2 of adenine 37 in tRNAs. The sequence is that of Probable dual-specificity RNA methyltransferase RlmN from Kineococcus radiotolerans (strain ATCC BAA-149 / DSM 14245 / SRS30216).